A 664-amino-acid chain; its full sequence is Translation factor guf1, mitochondrial (664 aa).

The transit peptide at 1-43 (MRGCLQLARWLSAAPKGTAASLTRAPFGLANATRFFTNSAARA) directs the protein to the mitochondrion. The 181-residue stretch at 66–246 (ERYRNFCIVA…TVVDKIPAPI (181 aa)) folds into the tr-type G domain. GTP-binding positions include 75-82 (AHVDHGKS), 139-143 (DTPGH), and 193-196 (NKVD).

This sequence belongs to the TRAFAC class translation factor GTPase superfamily. Classic translation factor GTPase family. LepA subfamily.

Its subcellular location is the mitochondrion inner membrane. The enzyme catalyses GTP + H2O = GDP + phosphate + H(+). In terms of biological role, promotes mitochondrial protein synthesis. May act as a fidelity factor of the translation reaction, by catalyzing a one-codon backward translocation of tRNAs on improperly translocated ribosomes. Binds to mitochondrial ribosomes in a GTP-dependent manner. This Aspergillus clavatus (strain ATCC 1007 / CBS 513.65 / DSM 816 / NCTC 3887 / NRRL 1 / QM 1276 / 107) protein is Translation factor guf1, mitochondrial (guf1).